The chain runs to 185 residues: Potassium-transporting ATPase KdpC subunit 2 (185 aa).

Residues 8-28 (LGLVLIMFVLCGFIFPLTVTA) traverse the membrane as a helical segment.

This sequence belongs to the KdpC family. As to quaternary structure, the system is composed of three essential subunits: KdpA, KdpB and KdpC.

It localises to the cell membrane. The protein resides in the membrane raft. In terms of biological role, part of the high-affinity ATP-driven potassium transport (or Kdp) system, which catalyzes the hydrolysis of ATP coupled with the electrogenic transport of potassium into the cytoplasm. This subunit acts as a catalytic chaperone that increases the ATP-binding affinity of the ATP-hydrolyzing subunit KdpB by the formation of a transient KdpB/KdpC/ATP ternary complex. This is Potassium-transporting ATPase KdpC subunit 2 from Staphylococcus aureus (strain Mu50 / ATCC 700699).